We begin with the raw amino-acid sequence, 1127 residues long: WD repeat and HMG-box DNA-binding protein 1 (1127 aa).

WD repeat units follow at residues 11–50 (GHPEGHTDVCFDDSGNFLVTCGSDGDIRIWESLDDDDPKS), 52–91 (SIGEKAYSFALKNGKVVTAASNNAIQLHTFPDGEPDGILT), 92–131 (RFTTNANHVVFNTDGTRIAAGSGDFLVKVLQVEDSTQQKT), 134–173 (GHSAPVLSVSFDPKDIYLASASCDGSVRIWKISDQTCEAV), 184–223 (FNAKSICRLAWQPKSGKFVAIPVGKAVHLYDRDSLKNICT), 228–267 (FITQPVNIVAWSPCGQYLVAGSVDGCIVAWNIATKACLER), and 271–310 (EKGYTICALAWHPHLPQIAYTDNEGNLGLLEDVCQGDVKQ). Disordered stretches follow at residues 811 to 1013 (AAEQ…AENK) and 1064 to 1127 (KAKG…FKKE). Acidic residues predominate over residues 819–829 (QNEEEDEEEED). Positions 846–857 (GDSRAKPVKQDQ) are enriched in basic and acidic residues. The span at 858-877 (YEENNEEEMEEEEKEQEEAL) shows a compositional bias: acidic residues. Composition is skewed to polar residues over residues 881–891 (TPTANPFNKSV) and 918–937 (SASQKSPAFASNSSRSTSIL). A compositionally biased stretch (low complexity) spans 948–960 (SASGSPSTSKSDS). A DNA-binding region (HMG box) is located at residues 1013 to 1076 (KKPKTGFQLW…GDYPGEDGAD (64 aa)). Residues 1087 to 1100 (NMASNGCPQENTDS) are compositionally biased toward polar residues.

As to quaternary structure, homodimer. Found in oocytes and in various other cells.

Its subcellular location is the nucleus. The protein localises to the nucleoplasm. The protein resides in the cytoplasm. Functionally, core replisome component that acts as a replication initiation factor. Binds directly to the CMG complex and functions as a hub to recruit additional proteins to the replication fork. The sequence is that of WD repeat and HMG-box DNA-binding protein 1 (wdhd1) from Xenopus laevis (African clawed frog).